A 162-amino-acid chain; its full sequence is Sorting nexin-3 (162 aa).

N-acetylalanine is present on Ala2. Residues 27 to 151 form the PX domain; the sequence is NFLEIDVSNP…HMFLQDEIID (125 aa). An Omega-N-methylarginine modification is found at Arg43. A 1,2-diacyl-sn-glycero-3-phospho-(1D-myo-inositol-3-phosphate) is bound by residues Arg70, Ser72, Lys95, and Arg118. Ser72 is modified (phosphoserine). Lys95 participates in a covalent cross-link: Glycyl lysine isopeptide (Lys-Gly) (interchain with G-Cter in SUMO2). Residues 147–162 form a binds predominantly to PtdIns(P5) and weaker to PtdIns(P3) abd PtdIns(P4); involved in neurite outgrowth regulation region; it reads DEIIDKSYTPSKIRHA.

It belongs to the sorting nexin family. Interacts with VPS26A, VPS29 and VPS35; the interaction with VPS35 is direct. The association with the retromer CSC subcomplex subunits is proposed to represent a functional distinct retromer variant described as SNX3-retromer complex. Interacts with USP10 and SCNN1A. Interacts with TRFC. Interacts with SNX8; 2 molecules of SNX8 seems to associate with one molecule of SNX3. Interacts with PTPRU. Interacts with MON2 and DOP1B. In terms of processing, ubiquitinated, leading to its proteasomal degradation. Deubiquitinated by USP10.

Its subcellular location is the early endosome. It is found in the cytoplasmic vesicle. The protein resides in the phagosome. Phosphoinositide-binding protein required for multivesicular body formation. Specifically binds phosphatidylinositol 3-phosphate (PtdIns(P3)). Can also bind phosphatidylinositol 4-phosphate (PtdIns(P4)), phosphatidylinositol 5-phosphate (PtdIns(P5)) and phosphatidylinositol 3,5-biphosphate (PtdIns(3,5)P2). Plays a role in protein transport between cellular compartments. Together with RAB7A facilitates endosome membrane association of the retromer cargo-selective subcomplex (CSC/VPS). May in part act as component of the SNX3-retromer complex which mediates the retrograde endosome-to-TGN transport of WLS distinct from the SNX-BAR retromer pathway. Promotes stability and cell surface expression of epithelial sodium channel (ENAC) subunits SCNN1A and SCNN1G. Not involved in EGFR degradation. Involved in the regulation of phagocytosis in dendritic cells possibly by regulating EEA1 recruitment to the nascent phagosomes. Involved in iron homeostasis through regulation of endocytic recycling of the transferrin receptor TFRC presumably by delivering the transferrin:transferrin receptor complex to recycling endosomes; the function may involve the CSC retromer subcomplex. In the case of Salmonella enterica infection plays arole in maturation of the Salmonella-containing vacuole (SCV) and promotes recruitment of LAMP1 to SCVs. The protein is Sorting nexin-3 of Homo sapiens (Human).